Reading from the N-terminus, the 283-residue chain is Bifunctional protein FolD (283 aa).

NADP(+) contacts are provided by residues 166 to 168 (GRS), S191, and I232.

Belongs to the tetrahydrofolate dehydrogenase/cyclohydrolase family. Homodimer.

The enzyme catalyses (6R)-5,10-methylene-5,6,7,8-tetrahydrofolate + NADP(+) = (6R)-5,10-methenyltetrahydrofolate + NADPH. It carries out the reaction (6R)-5,10-methenyltetrahydrofolate + H2O = (6R)-10-formyltetrahydrofolate + H(+). It participates in one-carbon metabolism; tetrahydrofolate interconversion. In terms of biological role, catalyzes the oxidation of 5,10-methylenetetrahydrofolate to 5,10-methenyltetrahydrofolate and then the hydrolysis of 5,10-methenyltetrahydrofolate to 10-formyltetrahydrofolate. This chain is Bifunctional protein FolD, found in Rickettsia bellii (strain RML369-C).